The primary structure comprises 32 residues: Phospholipase A2 (32 aa).

Ca(2+) is bound by residues Tyr-16, Gly-18, and Gly-20.

The cofactor is Ca(2+). As to expression, expressed by the venom gland.

It localises to the secreted. The enzyme catalyses a 1,2-diacyl-sn-glycero-3-phosphocholine + H2O = a 1-acyl-sn-glycero-3-phosphocholine + a fatty acid + H(+). Functionally, PLA2 catalyzes the calcium-dependent hydrolysis of the 2-acyl groups in 3-sn-phosphoglycerides. This Micrurus lemniscatus (South American coral snake) protein is Phospholipase A2.